The following is a 245-amino-acid chain: Small ribosomal subunit protein uS2 (245 aa).

The protein belongs to the universal ribosomal protein uS2 family.

This Pseudomonas putida (strain GB-1) protein is Small ribosomal subunit protein uS2.